The sequence spans 281 residues: MDFFNKFSQGLAESSTPKSSIYYSEEKDPDTKKDEAIEIGLKSQESYYQRQLREQLARDNMMAASRQPIQPLQPTIHITPQPVPTATPAPILLPSSTAPTPKPRQQTNTSSDMSNLFDWLSEDTDAPASSLLPALTPSNAVQDIISKFNKDQKTTTPPSTQPSQTLPTTTCTQQSDGNISCTTPTVTPPQPPIVATVCTPTPTGGTVCTTAQQNPNPGAASQQNLDDMALKDLMSSVEKDMHQLQAETNDLVTNVYDAREYTRRAIDQILQLVKGFERFQK.

The span at 1 to 22 (MDFFNKFSQGLAESSTPKSSIY) shows a compositional bias: polar residues. Disordered stretches follow at residues 1 to 33 (MDFFNKFSQGLAESSTPKSSIYYSEEKDPDTKK), 91 to 112 (ILLPSSTAPTPKPRQQTNTSSD), and 149 to 192 (NKDQ…PQPP). Basic and acidic residues predominate over residues 24 to 33 (SEEKDPDTKK). Polar residues predominate over residues 94-112 (PSSTAPTPKPRQQTNTSSD). A compositionally biased stretch (low complexity) spans 154–175 (TTTPPSTQPSQTLPTTTCTQQS).

This sequence belongs to the orthopoxvirus OPG130 family. In terms of assembly, interacts with OPG136 and its cleaved form. Its phosphorylation state is regulated by the OPG054 kinase and the OPG106 phosphatase.

It is found in the virion. The protein localises to the host endoplasmic reticulum-Golgi intermediate compartment membrane. In terms of biological role, component of the virion core. Participates in virion assembly. This Vaccinia virus (strain Copenhagen) (VACV) protein is 39kDa core protein OPG130 (OPG130).